A 241-amino-acid chain; its full sequence is Anthocyanidin 3-O-glucosyltransferase 4 (241 aa).

The UDP-alpha-D-glucose site is built by Gln-104, His-119, Trp-122, Asn-123, Ser-124, and Glu-127. Ala-142 lines the an anthocyanidin pocket. UDP-alpha-D-glucose is bound by residues Glu-143 and Gln-144.

The protein belongs to the UDP-glycosyltransferase family. As to expression, faintly expressed in cotyledons, roots and leaves.

It catalyses the reaction an anthocyanidin + UDP-alpha-D-glucose + H(+) = an anthocyanidin 3-O-beta-D-glucoside + UDP. Its pathway is pigment biosynthesis; anthocyanin biosynthesis. Functionally, in the presence of other necessary color factors, this glycosylation reaction allows the accumulation of anthocyanin pigments. The sequence is that of Anthocyanidin 3-O-glucosyltransferase 4 (GT4) from Manihot esculenta (Cassava).